Here is a 453-residue protein sequence, read N- to C-terminus: F-box/FBD/LRR-repeat protein At4g00160 (453 aa).

Residues 15 to 68 enclose the F-box domain; it reads KDRISELPDALLIKILSFLPTKIVVATSVFSKQWRPLWKLVPNLEFDSEDYDDK. 6 LRR repeats span residues 89–111, 165–190, 215–239, 247–270, 282–307, and 331–358; these read LESFRLEFESEKVDPVDIGLWVG, MKSLRTLHLELVSYKDESSIRNLLSG, VPSLKRLTINDDHDGQEFWGYVINA, IEDLRCPGFCLNAPELMEANIFDG, LTSVKRLLLNLSPWKITYPTGSIFYQ, and SPKLQVLKLTDNCVKFHKNGLPGGKWNE. One can recognise an FBD domain in the interval 355 to 406; the sequence is KWNEPKYVPECLLSHLETFVWRRFDWGREEEKEIATYILKNARRLNKATFST.

The chain is F-box/FBD/LRR-repeat protein At4g00160 from Arabidopsis thaliana (Mouse-ear cress).